A 295-amino-acid polypeptide reads, in one-letter code: GTPase Era (295 aa).

The Era-type G domain occupies 7–176 (KTVSVCIIGR…ITSKAKIAPW (170 aa)). Residues 15–22 (GRPNSGKS) form a G1 region. 15 to 22 (GRPNSGKS) contributes to the GTP binding site. The interval 41-45 (QTTRS) is G2. The tract at residues 62 to 65 (DTPG) is G3. GTP contacts are provided by residues 62 to 66 (DTPGI) and 124 to 127 (NKID). The tract at residues 124–127 (NKID) is G4. The segment at 152–154 (ISA) is G5. A KH type-2 domain is found at 204–281 (LQQELPYKLT…HLFLFVKVRE (78 aa)).

This sequence belongs to the TRAFAC class TrmE-Era-EngA-EngB-Septin-like GTPase superfamily. Era GTPase family. As to quaternary structure, monomer.

The protein localises to the cytoplasm. It is found in the cell inner membrane. Its function is as follows. An essential GTPase that binds both GDP and GTP, with rapid nucleotide exchange. Plays a role in 16S rRNA processing and 30S ribosomal subunit biogenesis and possibly also in cell cycle regulation and energy metabolism. In Rickettsia bellii (strain OSU 85-389), this protein is GTPase Era.